Reading from the N-terminus, the 223-residue chain is Endonuclease NucS (223 aa).

It belongs to the NucS endonuclease family.

Its subcellular location is the cytoplasm. Cleaves both 3' and 5' ssDNA extremities of branched DNA structures. The protein is Endonuclease NucS of Mycobacterium sp. (strain JLS).